An 880-amino-acid chain; its full sequence is Potassium transport protein 2 (880 aa).

An N-linked (GlcNAc...) asparagine glycan is attached at asparagine 9. The next 2 membrane-spanning stretches (helical) occupy residues 28–48 (FVQD…LYGS) and 84–104 (TILL…LTLF). Positions 157 to 182 (MHRPVAPETKAEEAEHQENEKHHRHH) are disordered. Basic and acidic residues predominate over residues 165 to 177 (TKAEEAEHQENEK). N-linked (GlcNAc...) asparagine glycosylation is found at asparagine 239, asparagine 283, asparagine 293, asparagine 294, asparagine 321, asparagine 443, and asparagine 460. Positions 289 to 315 (HHLDNNSSISSHNPSLETANDGNQETV) are enriched in polar residues. The segment at 289–344 (HHLDNNSSISSHNPSLETANDGNQETVSSSNSNYSTTRVDNDPHVASYSPQNSNFD) is disordered. Low complexity predominate over residues 316 to 325 (SSSNSNYSTT). 6 consecutive transmembrane segments (helical) span residues 494–514 (ILVV…LIFI), 571–591 (LIFL…WIMI), 625–645 (WVLF…FMVL), 684–704 (IAPA…YPIA), 756–776 (QLSH…IVEG), and 787–807 (FTLF…GLSL). Residues 857-880 (REEEDYMRRHGKKNTNRADPVPSS) form a disordered region.

It belongs to the TrkH potassium transport family.

The protein resides in the cell membrane. Together with TRK1, defines the major, high-affinity potassium influx transport system. Involved in maintenance of the proper sodium/potassium ratio in the cell and in regulating the plasma membrane potential. The sequence is that of Potassium transport protein 2 (trk2) from Schizosaccharomyces pombe (strain 972 / ATCC 24843) (Fission yeast).